We begin with the raw amino-acid sequence, 240 residues long: Uridylate kinase (240 aa).

12–15 lines the ATP pocket; that stretch reads KLSG. Residue Gly54 participates in UMP binding. Positions 55 and 59 each coordinate ATP. UMP-binding positions include Asp74 and 135–142; that span reads TGNPFFTT. Positions 162, 168, and 171 each coordinate ATP.

It belongs to the UMP kinase family. In terms of assembly, homohexamer.

The protein resides in the cytoplasm. It catalyses the reaction UMP + ATP = UDP + ADP. The protein operates within pyrimidine metabolism; CTP biosynthesis via de novo pathway; UDP from UMP (UMPK route): step 1/1. Its activity is regulated as follows. Inhibited by UTP. Functionally, catalyzes the reversible phosphorylation of UMP to UDP. The protein is Uridylate kinase of Xanthomonas axonopodis pv. citri (strain 306).